The chain runs to 152 residues: Snaclec lebecin subunit alpha (152 aa).

Residues 1 to 23 form the signal peptide; it reads MGRSISVSFGLLVVFLSLSGTGA. Cystine bridges form between Cys-27-Cys-38, Cys-54-Cys-147, and Cys-122-Cys-139. The C-type lectin domain maps to 34 to 148; sequence YEGGCYYVFD…CELAYHFICS (115 aa).

Heterodimer with the beta subunit (AC W5XCJ6); disulfide-linked. As to expression, expressed by the venom gland.

The protein resides in the secreted. Functionally, inhibits human breast cancer cells (MDA-MB231) migration and proliferation, as well as their adhesion to fibrinogen and fibronectin. This inhibition may be due to the binding to receptors of the integrin family, probably alpha-v/beta-3 (ITGAV/ITGB3) (40% inhibition of cell adhesion) and alpha-5/beta-1 (ITGA5/ITGB1) (by comparison with lebectin). In Macrovipera lebetinus (Levantine viper), this protein is Snaclec lebecin subunit alpha.